We begin with the raw amino-acid sequence, 292 residues long: Mycothiol acetyltransferase (292 aa).

N-acetyltransferase domains are found at residues 13–168 (ALDR…KWLQ) and 159–292 (KSVA…VYEK). Position 40 (Glu-40) interacts with 1D-myo-inositol 2-(L-cysteinylamino)-2-deoxy-alpha-D-glucopyranoside. Acetyl-CoA is bound at residue 77-79 (LAV). Residues Glu-179, Lys-218, and Glu-226 each contribute to the 1D-myo-inositol 2-(L-cysteinylamino)-2-deoxy-alpha-D-glucopyranoside site. Acetyl-CoA contacts are provided by residues 230 to 232 (VGL) and 237 to 243 (RGRGLGD). Tyr-264 serves as a coordination point for 1D-myo-inositol 2-(L-cysteinylamino)-2-deoxy-alpha-D-glucopyranoside.

It belongs to the acetyltransferase family. MshD subfamily. In terms of assembly, monomer.

The catalysed reaction is 1D-myo-inositol 2-(L-cysteinylamino)-2-deoxy-alpha-D-glucopyranoside + acetyl-CoA = mycothiol + CoA + H(+). Catalyzes the transfer of acetyl from acetyl-CoA to desacetylmycothiol (Cys-GlcN-Ins) to form mycothiol. The sequence is that of Mycothiol acetyltransferase from Corynebacterium glutamicum (strain ATCC 13032 / DSM 20300 / JCM 1318 / BCRC 11384 / CCUG 27702 / LMG 3730 / NBRC 12168 / NCIMB 10025 / NRRL B-2784 / 534).